The primary structure comprises 536 residues: Thiamine transport system permease protein ThiP (536 aa).

12 consecutive transmembrane segments (helical) span residues 12–32 (WLIP…AAFL), 58–78 (FSFW…IFLA), 95–115 (LCAM…LSVY), 134–154 (FSPY…LPMA), 199–219 (VAAL…SLGG), 240–260 (PARA…LVLL), 293–313 (VLIV…IVDG), 334–354 (SLRI…MLLW), 374–394 (SGML…FLLL), 404–424 (ADGI…LKVL), 463–483 (AQAL…VALF), and 506–526 (DGAV…TVIE). An ABC transmembrane type-1 1 domain is found at 56–261 (VRFSFWQAFL…VCCLGLVLLS (206 aa)). An ABC transmembrane type-1 2 domain is found at 331-525 (LWTSLRIALA…LLCFLLFTVI (195 aa)).

This sequence belongs to the binding-protein-dependent transport system permease family. CysTW subfamily. In terms of assembly, the complex is composed of two ATP-binding proteins (ThiQ), two transmembrane proteins (ThiP) and a solute-binding protein (ThiB).

The protein localises to the cell inner membrane. Transport is inhibited by the sulfhydryl-specific modifier N-ethylmaleimide. Part of the ABC transporter complex ThiBPQ involved in thiamine import. Probably responsible for the translocation of the substrate across the membrane. This Escherichia coli (strain K12) protein is Thiamine transport system permease protein ThiP (thiP).